Here is a 342-residue protein sequence, read N- to C-terminus: Oxygen-dependent coproporphyrinogen-III oxidase (342 aa).

Substrate is bound at residue S98. H102 and H112 together coordinate a divalent metal cation. The active-site Proton donor is H112. 114 to 116 (NYR) is a substrate binding site. A divalent metal cation-binding residues include H146 and H176. The interval 266–301 (YVEFNLVWDRGTIFGLQTNGRTESILMSLPPLARWE) is important for dimerization.

It belongs to the aerobic coproporphyrinogen-III oxidase family. Homodimer. A divalent metal cation serves as cofactor.

Its subcellular location is the cytoplasm. It carries out the reaction coproporphyrinogen III + O2 + 2 H(+) = protoporphyrinogen IX + 2 CO2 + 2 H2O. Its pathway is porphyrin-containing compound metabolism; protoporphyrin-IX biosynthesis; protoporphyrinogen-IX from coproporphyrinogen-III (O2 route): step 1/1. Its function is as follows. Involved in the heme and chlorophyll biosynthesis. Catalyzes the aerobic oxidative decarboxylation of propionate groups of rings A and B of coproporphyrinogen-III to yield the vinyl groups in protoporphyrinogen-IX. This is Oxygen-dependent coproporphyrinogen-III oxidase from Prochlorococcus marinus (strain AS9601).